Here is a 1550-residue protein sequence, read N- to C-terminus: Cellulose synthase 1 (1550 aa).

Positions 1–741 (MPEVRSSTQS…KERVLKGTVK (741 aa)) are catalytic. The next 3 membrane-spanning stretches (helical) occupy residues 26-46 (GAGLIIGVFGLCALIAATSVT), 47-67 (LPPEQQLIVAFVCVVIFFIVG), and 106-126 (GLLGTMLLVAELYALMMLFLS). The interval 147–240 (EWPTVDIFVP…YILIFDCDHV (94 aa)) is catalytic subdomain A. Aspartate 189 is a catalytic residue. The substrate site is built by aspartate 236 and aspartate 238. The tract at residues 317–377 (TAIEQIGGFA…GQRVRWARGM (61 aa)) is catalytic subdomain B. Aspartate 333 is an active-site residue. 5 helical membrane passes run 398–418 (LCYLSAMTSFLFAVPRVIFLS), 423–443 (FLFFGQNIIAASPLALLAYAI), 468–488 (VYETTMALFLVRVTIVTLLSP), 507–527 (FDLGAVYPNIILGLIMFGGLA), and 547–567 (LLNSAWAMLSLIIILAAIAVG). Residues 572 to 647 (QKRNSHRIPA…PARIIRAGNG (76 aa)) enclose the PilZ domain. 2 disordered regions span residues 708-731 (VHRSSPTKPSAGNALSDDTNNPSR) and 768-813 (APAH…QPLA). The segment at 742–1550 (MVSLLALLTF…KQLEDERRKS (809 aa)) is cyclic di-GMP binding domain. The segment covering 768–796 (APAHQPEASDLPPLPALLPATSGAAQAGS) has biased composition (low complexity). The helical transmembrane segment at 1513–1533 (VLLVGLLGCILIVSVLARALA) threads the bilayer.

The protein in the N-terminal section; belongs to the glycosyltransferase 2 family. This sequence in the C-terminal section; belongs to the AcsB/BcsB family. It depends on Mg(2+) as a cofactor.

The protein resides in the cell inner membrane. It carries out the reaction [(1-&gt;4)-beta-D-glucosyl](n) + UDP-alpha-D-glucose = [(1-&gt;4)-beta-D-glucosyl](n+1) + UDP + H(+). It functions in the pathway glycan metabolism; bacterial cellulose biosynthesis. Its function is as follows. Bifunctional protein comprised of a catalytic subunit and a regulatory subunit. The catalytic subunit of cellulose synthase polymerizes uridine 5'-diphosphate glucose to cellulose in a processive way. The thick cellulosic mats generated by this enzyme probably provide a specialized protective environment to the bacterium. The regulatory subunit binds bis-(3'-5') cyclic diguanylic acid (c-di-GMP). The polypeptide is Cellulose synthase 1 (acsAB) (Novacetimonas hansenii (Komagataeibacter hansenii)).